A 74-amino-acid polypeptide reads, in one-letter code: Conotoxin AbVIH (74 aa).

The N-terminal stretch at 1–17 is a signal peptide; the sequence is VLIIAVLFLTACQLTTA. The propeptide occupies 18–40; the sequence is ETSSRGKQKHRALRSTDKDSRMT. The tract at residues 19 to 40 is disordered; that stretch reads TSSRGKQKHRALRSTDKDSRMT. 3 cysteine pairs are disulfide-bonded: Cys43–Cys57, Cys50–Cys61, and Cys56–Cys68.

Belongs to the conotoxin O1 superfamily. Expressed by the venom duct.

It localises to the secreted. This is Conotoxin AbVIH from Conus abbreviatus (Abbreviated cone).